A 455-amino-acid chain; its full sequence is Glutamyl-tRNA reductase (455 aa).

Substrate is bound by residues 49-52 (TCNR), serine 109, 114-116 (EAQ), and glutamine 120. Cysteine 50 acts as the Nucleophile in catalysis. 190-195 (GAGAMG) serves as a coordination point for NADP(+).

Belongs to the glutamyl-tRNA reductase family. In terms of assembly, homodimer.

The catalysed reaction is (S)-4-amino-5-oxopentanoate + tRNA(Glu) + NADP(+) = L-glutamyl-tRNA(Glu) + NADPH + H(+). The protein operates within porphyrin-containing compound metabolism; protoporphyrin-IX biosynthesis; 5-aminolevulinate from L-glutamyl-tRNA(Glu): step 1/2. Its function is as follows. Catalyzes the NADPH-dependent reduction of glutamyl-tRNA(Glu) to glutamate 1-semialdehyde (GSA). This Salinispora tropica (strain ATCC BAA-916 / DSM 44818 / JCM 13857 / NBRC 105044 / CNB-440) protein is Glutamyl-tRNA reductase.